The primary structure comprises 149 residues: Protein RhiC (149 aa).

An N-terminal signal peptide occupies residues 1–23 (MTATLRAFGWLAAFALTVTFAQG).

It is found in the periplasm. Functionally, may be involved in plant-microbe interaction. The protein is Protein RhiC (rhiC) of Rhizobium leguminosarum bv. viciae.